Reading from the N-terminus, the 322-residue chain is MRSVVTGVGAYLPSKVVTNDDLAKFVDTSDEWIVERTGIRQRHQAADDQPVSDLAFEAAKEALAAAGKTAADVDLIIVATTTGDLTFPATATIVQRKLGAPVGVAFDVQAVCSGFVYAMSVADGFVARGHSKCALVIGAEAMTRLMDWSDRGTCVLFGDGAGAIVLEPGEGEGTTDDRGMLGFALRADGTKQDLLYVDGGPSTTGTVGKLRMLGNQVFKHAVVNISEAIHAAAGKAGVAVADVDWFIPHQANQRILQGVAHRCGIDEEKVISTVAIHANTSAASIPLAFAHGIKDGRIKKGDLLLLEAMGGGLTWGACVVRL.

Residues Cys-112 and His-249 contribute to the active site. The interval 250–254 (QANQR) is ACP-binding. Residue Asn-279 is part of the active site.

It belongs to the thiolase-like superfamily. FabH family. In terms of assembly, homodimer.

It is found in the cytoplasm. The catalysed reaction is malonyl-[ACP] + acetyl-CoA + H(+) = 3-oxobutanoyl-[ACP] + CO2 + CoA. It participates in lipid metabolism; fatty acid biosynthesis. Its function is as follows. Catalyzes the condensation reaction of fatty acid synthesis by the addition to an acyl acceptor of two carbons from malonyl-ACP. Catalyzes the first condensation reaction which initiates fatty acid synthesis and may therefore play a role in governing the total rate of fatty acid production. Possesses both acetoacetyl-ACP synthase and acetyl transacylase activities. Its substrate specificity determines the biosynthesis of branched-chain and/or straight-chain of fatty acids. In Caulobacter vibrioides (strain ATCC 19089 / CIP 103742 / CB 15) (Caulobacter crescentus), this protein is Beta-ketoacyl-[acyl-carrier-protein] synthase III.